Reading from the N-terminus, the 225-residue chain is MGRGKIEIKRIENPTNRQVTYSKRRNGIFKKAQELTVLCDAKVSLIMFSNTGKFHEYTSPTITTKKVYDQYQKTLGIDLWSSHYERMQENLRKLKEINNKLRREIRQRMGEDLGDLSIEDLRGLEQKMDASLGLVRERKYHVIKTQTETYRKKVRNLEEQHGNLLLNFEAKCDDPHYGLVENDGDYESAVAFANGASNLYAFRLHQAHPNLHHDGGYGSHDLRLA.

In terms of domain architecture, MADS-box spans 1-61 (MGRGKIEIKR…GKFHEYTSPT (61 aa)). The 91-residue stretch at 84-174 (YERMQENLRK…LLNFEAKCDD (91 aa)) folds into the K-box domain.

As to expression, expressed during flower development in stamens, petals and carpels. Expressed in fruits and seeds.

The protein resides in the nucleus. Functionally, probable transcription factor involved in flower development. In Vitis vinifera (Grape), this protein is Agamous-like MADS-box protein TM6.